Reading from the N-terminus, the 64-residue chain is Large ribosomal subunit protein bL35 (64 aa).

Positions 1–21 (MPKMKTNRGAAKRFKVKKSGK) are disordered. Basic residues predominate over residues 10–21 (AAKRFKVKKSGK).

The protein belongs to the bacterial ribosomal protein bL35 family.

This chain is Large ribosomal subunit protein bL35, found in Nautilia profundicola (strain ATCC BAA-1463 / DSM 18972 / AmH).